Reading from the N-terminus, the 507-residue chain is Aldehyde dehydrogenase 1, mitochondrial (507 aa).

A mitochondrion-targeting transit peptide spans M1–L21. NAD(+) is bound at residue G266–G271. Residues E289 and C323 contribute to the active site.

It belongs to the aldehyde dehydrogenase family. As to quaternary structure, homotetramer.

The protein resides in the mitochondrion matrix. It catalyses the reaction an aldehyde + NAD(+) + H2O = a carboxylate + NADH + 2 H(+). Its pathway is alcohol metabolism; ethanol degradation; acetate from ethanol: step 2/2. The protein is Aldehyde dehydrogenase 1, mitochondrial (ALD1) of Saccharomyces cerevisiae (Baker's yeast).